Consider the following 373-residue polypeptide: Ferroptosis suppressor protein 1 (373 aa).

Residue Gly-2 is the site of N-myristoyl glycine attachment. Residues 7-27 (VDTGAVHVVIVGGGFGGIAAA) traverse the membrane as a helical segment. Residues 18–22 (GGGFG), Arg-54, and Val-82 contribute to the 6-hydroxy-FAD site. N6-acetyllysine is present on Lys-168. Asp-285 lines the 6-hydroxy-FAD pocket.

Belongs to the FAD-dependent oxidoreductase family. As to quaternary structure, interacts with importin subunits KPNA2 and IPO5; this interaction likely mediates the translocation into the nucleus upon oxidative stress. 6-hydroxy-FAD is required as a cofactor. Post-translationally, N-myristoylation at Gly-2 mediates the recruitment to lipid droplets and plasma membrane. In terms of processing, acetylation at Lys-168 prevents AIFM2 ubiquitination and degradation, thereby inhibiting ferroptosis. KAT2B mediates acetylation at Lys-168, while HDAC3 removes it. Ubiquitinated. AIFM2 undergoes 'Lys-29'-ubiquitination and proteasomal degradation, which is inhibited by acetylation at Lys-168. Detected in most normal tissues as two transcripts of 1.8 and 4.0 kb in length, respectively. Highly expressed in liver, testis, and kidney, and expressed at lower levels in pancreas, spleen, brain and lung. Expressed in heart (at protein level).

The protein resides in the lipid droplet. Its subcellular location is the cell membrane. The protein localises to the cytoplasm. It localises to the mitochondrion membrane. It is found in the nucleus. It carries out the reaction ubiquinone-10 + NADH + H(+) = ubiquinol-10 + NAD(+). The enzyme catalyses phylloquinone + NADH + H(+) = phylloquinol + NAD(+). It catalyses the reaction menaquinone-4 + NADH + H(+) = menaquinol-4 + NAD(+). The catalysed reaction is menadione + NADH + H(+) = menadiol + NAD(+). Its activity is regulated as follows. The modification by 4-hydroxy-2-nonenal (HNE) adduction in mitochondria results in loss of the oxidoreductase activity and activation of a novel function in mitochondrial oxidative stress signaling. Its function is as follows. An NAD(P)H-dependent oxidoreductase that acts as a key inhibitor of ferroptosis. At the plasma membrane, catalyzes reduction of coenzyme Q/ubiquinone-10 to ubiquinol-10, a lipophilic radical-trapping antioxidant that prevents lipid oxidative damage and consequently ferroptosis. Acts in parallel to GPX4 to suppress phospholipid peroxidation and ferroptosis. This anti-ferroptotic function is independent of cellular glutathione levels. Also acts as a potent radical-trapping antioxidant by mediating warfarin-resistant vitamin K reduction in the canonical vitamin K cycle: catalyzes NAD(P)H-dependent reduction of vitamin K (phylloquinone, menaquinone-4 and menadione) to hydroquinone forms. Hydroquinones act as potent radical-trapping antioxidants inhibitor of phospholipid peroxidation and ferroptosis. May play a role in mitochondrial stress signaling. Upon oxidative stress, associates with the lipid peroxidation end product 4-hydroxy-2-nonenal (HNE) forming a lipid adduct devoid of oxidoreductase activity, which then translocates from mitochondria into the nucleus triggering DNA damage and cell death. This chain is Ferroptosis suppressor protein 1, found in Mus musculus (Mouse).